Consider the following 257-residue polypeptide: MLILVSPAKTLDFENPAATQSYSIPTLLGQSEQLIDVCRKLTPSDIASLMKVSDKIAGLNVARFSSWDSDFTPDNAKQAVFAFRGDVYTGLDADTLSEASLQKAQQQLRILSGLYGLLKPLDLMQAYRLEMGTRLSNARGTNLYQFWGDIITDEINQTTAAQGDEFIINLASNEYFKAVKHKQLTANLVTPVFKDKKNGQYKVISFFAKKARGMMVRYILDNNVESLDALIKFDSAGYYYSEAESTVTAPVFLREEQ.

Belongs to the UPF0246 family.

The sequence is that of UPF0246 protein swp_3736 from Shewanella piezotolerans (strain WP3 / JCM 13877).